The chain runs to 1397 residues: Clustered mitochondria protein homolog (1397 aa).

The stretch at leucine 30 to threonine 63 is one TPR 1 repeat. Disordered stretches follow at residues threonine 158–glutamate 203 and aspartate 526–glutamate 555. Positions glycine 161 to glutamate 203 are enriched in basic and acidic residues. The Clu domain maps to aspartate 368–isoleucine 640. The stretch at glutamate 559–glycine 595 is one TPR 2 repeat. Composition is skewed to basic and acidic residues over residues glutamate 686–serine 703, glutamate 812–alanine 831, serine 839–serine 860, and glutamine 1019–lysine 1033. Disordered stretches follow at residues glutamate 686–leucine 707, glutamate 812–proline 869, and glutamine 1019–asparagine 1050. Over residues lysine 1034–serine 1043 the composition is skewed to basic residues. 2 TPR repeats span residues isoleucine 1167–threonine 1200 and valine 1209–leucine 1242. Polar residues-rich tracts occupy residues alanine 1314–serine 1338 and proline 1362–valine 1373. A disordered region spans residues alanine 1314–alanine 1397. Basic and acidic residues predominate over residues aspartate 1375–serine 1384. The span at proline 1386–alanine 1397 shows a compositional bias: basic residues.

It belongs to the CLU family. In terms of assembly, may associate with the eukaryotic translation initiation factor 3 (eIF-3) complex.

It localises to the cytoplasm. In terms of biological role, mRNA-binding protein involved in proper cytoplasmic distribution of mitochondria. In Lodderomyces elongisporus (strain ATCC 11503 / CBS 2605 / JCM 1781 / NBRC 1676 / NRRL YB-4239) (Yeast), this protein is Clustered mitochondria protein homolog.